Consider the following 473-residue polypeptide: Ribulose bisphosphate carboxylase large chain (473 aa).

Residues 1-2 (MS) constitute a propeptide that is removed on maturation. Substrate-binding residues include N123 and T173. Residue K175 is the Proton acceptor of the active site. K177 contacts substrate. Mg(2+) is bound by residues K201, D203, and E204. K201 bears the N6-carboxylysine mark. At S208 the chain carries Phosphoserine. H294 serves as the catalytic Proton acceptor. The substrate site is built by R295 and H327. T330 carries the phosphothreonine modification. Position 379 (S379) interacts with substrate.

It belongs to the RuBisCO large chain family. Type I subfamily. Heterohexadecamer of 8 large chains and 8 small chains; disulfide-linked. The disulfide link is formed within the large subunit homodimers. It depends on Mg(2+) as a cofactor. In terms of processing, the disulfide bond which can form in the large chain dimeric partners within the hexadecamer appears to be associated with oxidative stress and protein turnover.

It localises to the plastid. The protein resides in the chloroplast. It carries out the reaction 2 (2R)-3-phosphoglycerate + 2 H(+) = D-ribulose 1,5-bisphosphate + CO2 + H2O. The catalysed reaction is D-ribulose 1,5-bisphosphate + O2 = 2-phosphoglycolate + (2R)-3-phosphoglycerate + 2 H(+). In terms of biological role, ruBisCO catalyzes two reactions: the carboxylation of D-ribulose 1,5-bisphosphate, the primary event in carbon dioxide fixation, as well as the oxidative fragmentation of the pentose substrate in the photorespiration process. Both reactions occur simultaneously and in competition at the same active site. This is Ribulose bisphosphate carboxylase large chain from Sinapis alba (White mustard).